Reading from the N-terminus, the 137-residue chain is Large ribosomal subunit protein uL16 (137 aa).

The protein belongs to the universal ribosomal protein uL16 family. As to quaternary structure, part of the 50S ribosomal subunit.

In terms of biological role, binds 23S rRNA and is also seen to make contacts with the A and possibly P site tRNAs. The polypeptide is Large ribosomal subunit protein uL16 (Agrobacterium fabrum (strain C58 / ATCC 33970) (Agrobacterium tumefaciens (strain C58))).